Reading from the N-terminus, the 141-residue chain is Large ribosomal subunit protein uL11 (141 aa).

It belongs to the universal ribosomal protein uL11 family. Part of the ribosomal stalk of the 50S ribosomal subunit. Interacts with L10 and the large rRNA to form the base of the stalk. L10 forms an elongated spine to which L12 dimers bind in a sequential fashion forming a multimeric L10(L12)X complex. Post-translationally, one or more lysine residues are methylated.

Functionally, forms part of the ribosomal stalk which helps the ribosome interact with GTP-bound translation factors. The protein is Large ribosomal subunit protein uL11 of Chlamydia muridarum (strain MoPn / Nigg).